Consider the following 323-residue polypeptide: Aldo-keto reductase family 1 member C18 (323 aa).

NADP(+) is bound by residues 20 to 24 (GFGTY) and Asp50. Tyr55 functions as the Proton donor in the catalytic mechanism. His117 provides a ligand contact to substrate. NADP(+) contacts are provided by residues 166–167 (SN), Gln190, 216–221 (YGALGT), and 270–280 (KSFNEERIREN).

Belongs to the aldo/keto reductase family. As to quaternary structure, monomer. In terms of processing, the N-terminus is blocked. Corpus luteum (large luteal cells).

It localises to the cytoplasm. The catalysed reaction is (17R,20S)-17,20-dihydroxypregn-4-en-3-one + NADP(+) = 17alpha-hydroxyprogesterone + NADPH + H(+). The enzyme catalyses (17R,20S)-17,20-dihydroxypregn-4-en-3-one + NAD(+) = 17alpha-hydroxyprogesterone + NADH + H(+). Functionally, catalyzes the conversion of progesterone into 20-alpha-dihydroprogesterone (20 alpha-OHP). In Rattus norvegicus (Rat), this protein is Aldo-keto reductase family 1 member C18 (Akr1c18).